A 245-amino-acid chain; its full sequence is NAD-dependent protein deacetylase (245 aa).

The region spanning 1–245 (MIFVQQFEEV…EFVEGLSSMK (245 aa)) is the Deacetylase sirtuin-type domain. NAD(+) is bound by residues alanine 26, threonine 30, phenylalanine 37, arginine 38, glutamine 105, isoleucine 107, aspartate 108, and histidine 123. Phenylalanine 37 lines the nicotinamide pocket. Isoleucine 107 and aspartate 108 together coordinate nicotinamide. Histidine 123 serves as the catalytic Proton acceptor. Zn(2+) contacts are provided by cysteine 131, cysteine 134, cysteine 151, and cysteine 154. NAD(+)-binding residues include threonine 190, serine 191, asparagine 216, and isoleucine 234.

It belongs to the sirtuin family. Class U subfamily. Zn(2+) is required as a cofactor.

The protein resides in the cytoplasm. The enzyme catalyses N(6)-acetyl-L-lysyl-[protein] + NAD(+) + H2O = 2''-O-acetyl-ADP-D-ribose + nicotinamide + L-lysyl-[protein]. Its function is as follows. NAD-dependent protein deacetylase which modulates the activities of several enzymes which are inactive in their acetylated form. The sequence is that of NAD-dependent protein deacetylase from Bacillus cereus (strain ATCC 14579 / DSM 31 / CCUG 7414 / JCM 2152 / NBRC 15305 / NCIMB 9373 / NCTC 2599 / NRRL B-3711).